We begin with the raw amino-acid sequence, 319 residues long: CD2 antigen cytoplasmic tail-binding protein 2 homolog (319 aa).

Disordered stretches follow at residues 1 to 57 (MASK…EDDV) and 105 to 124 (NAFDPAKDEENSSDEEKNEP). The span at 12–24 (KVKEESFKKHTLD) shows a compositional bias: basic and acidic residues. 2 positions are modified to phosphoserine: Ser-25 and Ser-30. Residues 25-47 (SDEEDSDDYEREYLNDSDIEGGE) are compositionally biased toward acidic residues. Tyr-37 carries the post-translational modification Phosphotyrosine. At Ser-41 the chain carries Phosphoserine. Positions 109 to 124 (PAKDEENSSDEEKNEP) are enriched in basic and acidic residues. Residues 260-316 (EVTWEFKWSQDETDIQGPFSTEKMLKWSQENYFKNGVYVRKCGENTNFYTSNRIDFD) enclose the GYF domain.

Its subcellular location is the nucleus. Its function is as follows. Required for embryonic epithelial tissue repair, but not for the assembly of the actomyosin cable at the wound edge. Probably acts downstream of rl in the regulation of Ddc and msn transcription to promote wound healing. The sequence is that of CD2 antigen cytoplasmic tail-binding protein 2 homolog (holn1) from Drosophila melanogaster (Fruit fly).